The primary structure comprises 185 residues: ATP-dependent protease subunit HslV (185 aa).

Thr2 is an active-site residue. Residues Gly157, Cys160, and Thr163 each contribute to the Na(+) site.

Belongs to the peptidase T1B family. HslV subfamily. A double ring-shaped homohexamer of HslV is capped on each side by a ring-shaped HslU homohexamer. The assembly of the HslU/HslV complex is dependent on binding of ATP.

Its subcellular location is the cytoplasm. The catalysed reaction is ATP-dependent cleavage of peptide bonds with broad specificity.. Its activity is regulated as follows. Allosterically activated by HslU binding. Its function is as follows. Protease subunit of a proteasome-like degradation complex believed to be a general protein degrading machinery. This chain is ATP-dependent protease subunit HslV, found in Idiomarina loihiensis (strain ATCC BAA-735 / DSM 15497 / L2-TR).